Here is a 472-residue protein sequence, read N- to C-terminus: Poly(A) polymerase catalytic subunit (472 aa).

Catalysis depends on residues Asp-191 and Asp-193.

The protein belongs to the poxviridae poly(A) polymerase catalytic subunit family. Heterodimer of a large (catalytic) subunit and a small (regulatory) subunit.

It catalyses the reaction RNA(n) + ATP = RNA(n)-3'-adenine ribonucleotide + diphosphate. In terms of biological role, polymerase that creates the 3'-poly(A) tail of mRNA's. The sequence is that of Poly(A) polymerase catalytic subunit (PAPL) from Capra hircus (Goat).